Reading from the N-terminus, the 130-residue chain is Protein CPn_0713/CP_0033/CPj0713/CpB0740 (130 aa).

It belongs to the chlamydial CPn_0713/CT_663/TC_0034 family.

The polypeptide is Protein CPn_0713/CP_0033/CPj0713/CpB0740 (Chlamydia pneumoniae (Chlamydophila pneumoniae)).